The chain runs to 1107 residues: Ubiquitin-associated protein 2-like (1107 aa).

Position 1 is an N-acetylmethionine (methionine 1). Positions 1-33 (MMTSVGTNRARGNWEQPQNQNQTQHKQRPQATA) are disordered. The region spanning 49–89 (DFEEKVKQLIDITGKNQDECVIALHDCNGDVNRAINVLLEG) is the UBA domain. The interval 92–229 (DTHSWEMVGK…NTWNNTGHFE (138 aa)) is disordered. The segment covering 118-132 (EEGKENRDRDRDYSR) has biased composition (basic and acidic residues). Residues 133-145 (RRGGPPRRGRGAS) are compositionally biased toward basic residues. 2 positions are modified to asymmetric dimethylarginine: arginine 187 and arginine 190. The segment covering 213–226 (NYGNSSGNTWNNTG) has biased composition (low complexity). A phosphoserine mark is found at serine 376, serine 380, and serine 436. Threonine 445 is modified (phosphothreonine). 3 disordered regions span residues 461-513 (AVAT…KKTS), 550-676 (SDYE…IPSL), and 689-814 (ANQH…LPPG). Residues serine 474, serine 487, serine 490, serine 491, and serine 497 each carry the phosphoserine modification. Composition is skewed to low complexity over residues 494–505 (QSSSPQPAQQKL) and 554–589 (STPT…SQES). Residues 590–656 (GYQSGPIQST…TQLQTTQSVE (67 aa)) are compositionally biased toward polar residues. Serine 624, serine 625, serine 628, and serine 629 each carry phosphoserine. Low complexity predominate over residues 665-675 (SESPSTSSIPS). Residues 689 to 713 (ANQHSSSLSGLSHTEEIPNTTTTQH) show a composition bias toward polar residues. A compositionally biased stretch (low complexity) spans 714 to 804 (SSALSTQQNT…STRSSVATTS (91 aa)). Residues serine 872 and serine 879 each carry the phosphoserine modification. Disordered regions lie at residues 885–921 (FGRG…LNPA) and 1060–1107 (QQPH…WGAN). 2 stretches are compositionally biased toward low complexity: residues 893–916 (PAPA…TQQT) and 1073–1087 (QDGQ…QTSS). Residues 1088-1107 (IPQKPQTNKSAYNSYSWGAN) are compositionally biased toward polar residues.

Interacts with BMI1. Part of a complex consisting of UBAP2L, BMI1 and RNF2. Interacts with G3BP1 (via NTF2 domain); promoting stress granule formation.

It localises to the nucleus. It is found in the chromosome. The protein localises to the cytoplasm. The protein resides in the stress granule. Its function is as follows. Recruits the ubiquitination machinery to RNA polymerase II for polyubiquitination, removal and degradation, when the transcription-coupled nucleotide excision repair (TC-NER) machinery fails to resolve DNA damage. Plays an important role in the activity of long-term repopulating hematopoietic stem cells (LT-HSCs). Is a regulator of stress granule assembly, required for their efficient formation. Required for proper brain development and neocortex lamination. The protein is Ubiquitin-associated protein 2-like of Mus musculus (Mouse).